A 310-amino-acid chain; its full sequence is Zinc-finger homeodomain protein 3 (310 aa).

Residues methionine 1–histidine 64 form a disordered region. The segment covering leucine 39–leucine 56 has biased composition (polar residues). The ZF-HD dimerization-type; degenerate zinc finger occupies tyrosine 87 to glutamate 136. Disordered stretches follow at residues threonine 184–asparagine 220 and leucine 281–proline 310. Residues glutamate 190–glycine 199 are compositionally biased toward acidic residues. Residues lysine 222–serine 285 constitute a DNA-binding region (homeobox). A compositionally biased stretch (low complexity) spans leucine 281 to asparagine 291. A compositionally biased stretch (polar residues) spans valine 292–proline 310.

Homo- and heterodimer with other ZFHD proteins. Interacts with MIF2 and MIF3; these interactions prevent nuclear localization and DNA-binding to inhibit transcription regulation activity. Binds to ZHD1, ZHD2 and ZHD11. Interacts with HIPP30. Interacts with KIN10, KIN11 and FLZ8. Mostly expressed in flowers and inflorescence.

It localises to the nucleus. Putative transcription factor. The sequence is that of Zinc-finger homeodomain protein 3 (ZHD3) from Arabidopsis thaliana (Mouse-ear cress).